The chain runs to 387 residues: Alanine racemase (387 aa).

Lysine 38 (proton acceptor; specific for D-alanine) is an active-site residue. Lysine 38 is subject to N6-(pyridoxal phosphate)lysine. Residue arginine 136 participates in substrate binding. The Proton acceptor; specific for L-alanine role is filled by tyrosine 267. Residue methionine 316 coordinates substrate.

Belongs to the alanine racemase family. Requires pyridoxal 5'-phosphate as cofactor.

It carries out the reaction L-alanine = D-alanine. The protein operates within amino-acid biosynthesis; D-alanine biosynthesis; D-alanine from L-alanine: step 1/1. In terms of biological role, catalyzes the interconversion of L-alanine and D-alanine. May also act on other amino acids. In Clostridium tetani (strain Massachusetts / E88), this protein is Alanine racemase (alr).